The following is a 373-amino-acid chain: Flagellar P-ring protein (373 aa).

Residues methionine 1–alanine 28 form the signal peptide.

The protein belongs to the FlgI family. The basal body constitutes a major portion of the flagellar organelle and consists of four rings (L,P,S, and M) mounted on a central rod.

The protein resides in the periplasm. It localises to the bacterial flagellum basal body. In terms of biological role, assembles around the rod to form the L-ring and probably protects the motor/basal body from shearing forces during rotation. The protein is Flagellar P-ring protein of Rhodopseudomonas palustris (strain HaA2).